A 354-amino-acid polypeptide reads, in one-letter code: Protein-arginine kinase (354 aa).

One can recognise a Phosphagen kinase C-terminal domain in the interval 24–254 (IVLSSRIRLA…QQIIHQEKTA (231 aa)). ATP-binding positions include 27–31 (SSRIR), histidine 92, arginine 125, 176–180 (RASVM), and 207–212 (RGIYGE). Residues 337 to 342 (RDYRRA) carry the RDXXRA motif of the pArg binding pocket involved in allosteric regulation motif.

It belongs to the ATP:guanido phosphotransferase family.

It catalyses the reaction L-arginyl-[protein] + ATP = N(omega)-phospho-L-arginyl-[protein] + ADP + H(+). With respect to regulation, appears to be allosterically activated by the binding of pArg-containing polypeptides to the pArg-binding pocket localized in the C-terminal domain of McsB. In terms of biological role, catalyzes the specific phosphorylation of arginine residues in a large number of proteins. Is part of the bacterial stress response system. Protein arginine phosphorylation has a physiologically important role and is involved in the regulation of many critical cellular processes, such as protein homeostasis, motility, competence, and stringent and stress responses, by regulating gene expression and protein activity. The polypeptide is Protein-arginine kinase (Bacillus mycoides (strain KBAB4) (Bacillus weihenstephanensis)).